The primary structure comprises 208 residues: Probable very-long-chain (3R)-3-hydroxyacyl-CoA dehydratase (208 aa).

Residues 1-11 (MSKILKIQYLK) lie on the Cytoplasmic side of the membrane. The chain crosses the membrane as a helical span at residues 12-35 (LYNVISCFLWMSVLLRTGLIWGIT). Over 36 to 46 (KDTAVVFHETN) the chain is Lumenal. Residues 47–67 (TLVRWVQTLAIAEVFHSIFGL) form a helical membrane-spanning segment. Residues 68–78 (VSSSPLTTIIQ) lie on the Cytoplasmic side of the membrane. The helical transmembrane segment at 79-97 (VASRLYLVWGVCYPFSYVI) threads the bilayer. Topologically, residues 98–102 (EGSPI) are lumenal. Residues 103–123 (YLSMIIAWSITEIIRYAFYAF) form a helical membrane-spanning segment. Residues 124–134 (NLNGDIPAFLT) lie on the Cytoplasmic side of the membrane. Residues 135–157 (WLRYNTFLILYPIGAGSEFLLVL) form a helical membrane-spanning segment. Catalysis depends on residues Tyr-145 and Glu-152. Over 158–171 (KSRIAAQYVWSLNK) the chain is Lumenal. Residues 172-192 (LLWPILMSIYPPGLYIMYTHM) form a helical membrane-spanning segment. At 193–208 (LAQRRKISKRAAARRT) the chain is on the cytoplasmic side.

Belongs to the very long-chain fatty acids dehydratase HACD family.

Its subcellular location is the endoplasmic reticulum membrane. The catalysed reaction is a very-long-chain (3R)-3-hydroxyacyl-CoA = a very-long-chain (2E)-enoyl-CoA + H2O. It participates in lipid metabolism; fatty acid biosynthesis. In terms of biological role, catalyzes the third of the four reactions of the long-chain fatty acids elongation cycle. This endoplasmic reticulum-bound enzymatic process, allows the addition of two carbons to the chain of long- and very long-chain fatty acids/VLCFAs per cycle. This enzyme catalyzes the dehydration of the 3-hydroxyacyl-CoA intermediate into trans-2,3-enoyl-CoA, within each cycle of fatty acid elongation. Thereby, it participates in the production of VLCFAs of different chain lengths that are involved in multiple biological processes as precursors of membrane lipids and lipid mediators. This is Probable very-long-chain (3R)-3-hydroxyacyl-CoA dehydratase from Schizosaccharomyces pombe (strain 972 / ATCC 24843) (Fission yeast).